Here is a 199-residue protein sequence, read N- to C-terminus: Shikimate kinase (199 aa).

Residue 34–39 participates in ATP binding; sequence GAGKTA. A Mg(2+)-binding site is contributed by threonine 38. Residues aspartate 56, arginine 80, and glycine 102 each coordinate substrate. Arginine 140 contributes to the ATP binding site. Residue arginine 159 coordinates substrate.

This sequence belongs to the shikimate kinase family. In terms of assembly, monomer. Requires Mg(2+) as cofactor.

The protein resides in the cytoplasm. The enzyme catalyses shikimate + ATP = 3-phosphoshikimate + ADP + H(+). Its pathway is metabolic intermediate biosynthesis; chorismate biosynthesis; chorismate from D-erythrose 4-phosphate and phosphoenolpyruvate: step 5/7. Catalyzes the specific phosphorylation of the 3-hydroxyl group of shikimic acid using ATP as a cosubstrate. This is Shikimate kinase from Cereibacter sphaeroides (strain ATCC 17023 / DSM 158 / JCM 6121 / CCUG 31486 / LMG 2827 / NBRC 12203 / NCIMB 8253 / ATH 2.4.1.) (Rhodobacter sphaeroides).